The sequence spans 1263 residues: DNA-directed RNA polymerase subunit beta (1263 aa).

Belongs to the RNA polymerase beta chain family. As to quaternary structure, the RNAP catalytic core consists of 2 alpha, 1 beta, 1 beta' and 1 omega subunit. When a sigma factor is associated with the core the holoenzyme is formed, which can initiate transcription.

It carries out the reaction RNA(n) + a ribonucleoside 5'-triphosphate = RNA(n+1) + diphosphate. Its function is as follows. DNA-dependent RNA polymerase catalyzes the transcription of DNA into RNA using the four ribonucleoside triphosphates as substrates. This is DNA-directed RNA polymerase subunit beta from Thermotoga maritima (strain ATCC 43589 / DSM 3109 / JCM 10099 / NBRC 100826 / MSB8).